A 444-amino-acid chain; its full sequence is Phosphoglucosamine mutase (444 aa).

Residue Ser-102 is the Phosphoserine intermediate of the active site. The Mg(2+) site is built by Ser-102, Asp-241, Asp-243, and Asp-245. Ser-102 is modified (phosphoserine).

It belongs to the phosphohexose mutase family. The cofactor is Mg(2+). Post-translationally, activated by phosphorylation.

The catalysed reaction is alpha-D-glucosamine 1-phosphate = D-glucosamine 6-phosphate. Functionally, catalyzes the conversion of glucosamine-6-phosphate to glucosamine-1-phosphate. This is Phosphoglucosamine mutase from Actinobacillus succinogenes (strain ATCC 55618 / DSM 22257 / CCUG 43843 / 130Z).